We begin with the raw amino-acid sequence, 701 residues long: C6 finger domain transcription factor nscR (701 aa).

The zn(2)-C6 fungal-type DNA-binding region spans 17-43; the sequence is CELCRERKVKCDKLDPCTNCASAGVVC.

It localises to the nucleus. Its function is as follows. Transcription factor that specifically regulates the neosartoricin B biosynthesis gene cluster. The chain is C6 finger domain transcription factor nscR from Arthroderma gypseum (strain ATCC MYA-4604 / CBS 118893) (Microsporum gypseum).